We begin with the raw amino-acid sequence, 1378 residues long: Macrophage-stimulating protein receptor (1378 aa).

The signal sequence occupies residues 1–23 (MGLPLPLLQSSLLLMLLLRLSAA). The Extracellular portion of the chain corresponds to 25 to 960 (TNLNWQCPRI…RSSPGRASQR (936 aa)). A Sema domain is found at 33 to 524 (RIPYAASRDF…SGDQVFKVPI (492 aa)). N-linked (GlcNAc...) asparagine glycosylation is present at N91. Disulfide bonds link C102–C105, C108–C163, C136–C144, C175–C178, C301–C368, C386–C409, and C387–C424. 3 N-linked (GlcNAc...) asparagine glycosylation sites follow: N391, N460, and N490. Intrachain disulfides connect C529/C547, C535/C569, C538/C554, and C550/C560. IPT/TIG domains follow at residues 571 to 673 (PEIS…FRVE), 686 to 769 (PVLT…FHYK), and 772 to 864 (PIVL…FRFL). Residues N656, N722, N845, and N901 are each glycosylated (N-linked (GlcNAc...) asparagine). A helical membrane pass occupies residues 961 to 981 (ILLIALLVLILLVAVLAVALI). Topologically, residues 982-1378 (FNSRRRKKQL…RPLSEPPLPT (397 aa)) are cytoplasmic. Positions 1002–1026 (SDINDTASGAPNHEESSESRDGTSV) are disordered. The segment covering 1013-1022 (NHEESSESRD) has biased composition (basic and acidic residues). Residues 1059 to 1322 (IHTDQVIGKG…ALVLEVKQVV (264 aa)) form the Protein kinase domain. Residues 1065–1073 (IGKGHFGVV), K1091, and 1138–1141 (LPYM) contribute to the ATP site. Catalysis depends on D1185, which acts as the Proton acceptor. R1189 is a binding site for ATP. A phosphotyrosine; by autocatalysis mark is found at Y1215, Y1216, Y1330, and Y1337. The tract at residues 1347 to 1378 (DGSVPPEQVQPSPQHCRSTSKPRPLSEPPLPT) is disordered. Residues 1349–1360 (SVPPEQVQPSPQ) show a composition bias toward low complexity.

Belongs to the protein kinase superfamily. Tyr protein kinase family. In terms of assembly, heterodimer of an alpha chain and a beta chain which are disulfide linked. Binds PLXNB1. Associates with and is negatively regulated by HYAL2. Interacts when phosphorylated with downstream effectors including PIK3R1, PCLG1, GRB2 and GAB1. Interacts with integrin beta1/ITGB1 in a ligand-independent fashion. Isoform sf-Stk forms covalent heterodimers with friend spleen focus-forming virus (FSFFV) gp55. Proteolytic processing yields the two subunits. In terms of processing, autophosphorylated in response to ligand binding on Tyr-1215 and Tyr-1216 in the kinase domain leading to further phosphorylation of Tyr-1330 and Tyr-1337 in the C-terminal multifunctional docking site. Post-translationally, ubiquitinated. Ubiquitination by CBL regulates the receptor stability and activity through proteasomal degradation. O-mannosylation of IPT/TIG domains on Thr or Ser residues by TMEM260 is required for protein maturation. O-mannosylated residues are composed of single mannose glycans that are not elongated or modified. Expressed in liver, skin, lung, brain, testis and kidney.

The protein localises to the membrane. The catalysed reaction is L-tyrosyl-[protein] + ATP = O-phospho-L-tyrosyl-[protein] + ADP + H(+). In its inactive state, the C-terminal tail interacts with the catalytic domain and inhibits the kinase activity. Upon ligand binding, the C-terminal tail is displaced and becomes phosphorylated, thus increasing the kinase activity. Receptor tyrosine kinase that transduces signals from the extracellular matrix into the cytoplasm by binding to MST1 ligand. Regulates many physiological processes including cell survival, migration and differentiation. Ligand binding at the cell surface induces autophosphorylation of RON on its intracellular domain that provides docking sites for downstream signaling molecules. Following activation by ligand, interacts with the PI3-kinase subunit PIK3R1, PLCG1 or the adapter GAB1. Recruitment of these downstream effectors by RON leads to the activation of several signaling cascades including the RAS-ERK, PI3 kinase-AKT, or PLCgamma-PKC. RON signaling activates the wound healing response by promoting epithelial cell migration, proliferation as well as survival at the wound site. Also plays a role in the innate immune response by regulating the migration and phagocytic activity of macrophages. Alternatively, RON can also promote signals such as cell migration and proliferation in response to growth factors other than MST1 ligand. In Mus musculus (Mouse), this protein is Macrophage-stimulating protein receptor (Mst1r).